Consider the following 298-residue polypeptide: Inosose dehydratase (298 aa).

This sequence belongs to the IolE/MocC family. The cofactor is glutathione. It depends on Co(2+) as a cofactor. Mn(2+) serves as cofactor.

It catalyses the reaction scyllo-inosose = 3D-3,5/4-trihydroxycyclohexane-1,2-dione + H2O. It participates in polyol metabolism; myo-inositol degradation into acetyl-CoA; acetyl-CoA from myo-inositol: step 2/7. Functionally, catalyzes the dehydration of inosose (2-keto-myo-inositol, 2KMI or 2,4,6/3,5-pentahydroxycyclohexanone) to 3D-(3,5/4)-trihydroxycyclohexane-1,2-dione (D-2,3-diketo-4-deoxy-epi-inositol). This is Inosose dehydratase from Bacillus anthracis (strain CDC 684 / NRRL 3495).